The following is a 473-amino-acid chain: Sulfate adenylyltransferase subunit 1 (473 aa).

One can recognise a tr-type G domain in the interval 19 to 238 (KTLLKFLTCG…IKIKNSISSE (220 aa)). The G1 stretch occupies residues 28 to 35 (GSVDDGKS). A GTP-binding site is contributed by 28–35 (GSVDDGKS). The segment at 86 to 90 (GITID) is G2. A G3 region spans residues 107–110 (DTPG). GTP contacts are provided by residues 107–111 (DTPGH) and 162–165 (NKMD). The interval 162 to 165 (NKMD) is G4. Residues 200-202 (SAL) form a G5 region.

This sequence belongs to the TRAFAC class translation factor GTPase superfamily. Classic translation factor GTPase family. CysN/NodQ subfamily. In terms of assembly, heterodimer composed of CysD, the smaller subunit, and CysN.

The enzyme catalyses sulfate + ATP + H(+) = adenosine 5'-phosphosulfate + diphosphate. Its pathway is sulfur metabolism; hydrogen sulfide biosynthesis; sulfite from sulfate: step 1/3. Its function is as follows. With CysD forms the ATP sulfurylase (ATPS) that catalyzes the adenylation of sulfate producing adenosine 5'-phosphosulfate (APS) and diphosphate, the first enzymatic step in sulfur assimilation pathway. APS synthesis involves the formation of a high-energy phosphoric-sulfuric acid anhydride bond driven by GTP hydrolysis by CysN coupled to ATP hydrolysis by CysD. This chain is Sulfate adenylyltransferase subunit 1, found in Buchnera aphidicola subsp. Acyrthosiphon pisum (strain APS) (Acyrthosiphon pisum symbiotic bacterium).